A 417-amino-acid polypeptide reads, in one-letter code: Tryptophan synthase beta chain (417 aa).

Lys-99 bears the N6-(pyridoxal phosphate)lysine mark.

Belongs to the TrpB family. Tetramer of two alpha and two beta chains. The cofactor is pyridoxal 5'-phosphate.

It carries out the reaction (1S,2R)-1-C-(indol-3-yl)glycerol 3-phosphate + L-serine = D-glyceraldehyde 3-phosphate + L-tryptophan + H2O. Its pathway is amino-acid biosynthesis; L-tryptophan biosynthesis; L-tryptophan from chorismate: step 5/5. The beta subunit is responsible for the synthesis of L-tryptophan from indole and L-serine. The protein is Tryptophan synthase beta chain of Corynebacterium glutamicum (strain R).